We begin with the raw amino-acid sequence, 1337 residues long: MDAPRALAAKPPTGRKMKARAPPPPGKPAAQNVHSEQKLPHDATLGSQQSLVYMKEALQNSTLDITVVLPSGLEKQSVVSGSHAMMDLLVELCLQNHLNPSHHVLEIWSSETQQPLSFKPNTLIGSLNVHTVLLKEKVPEERVKPGLTKAPEKSVRLVVNYLRTQKAVVRVSPEVPLQNILPVICAKCEVNPEHVILLRDNVAGEELELSKSLNELGIKELYAWDNRREMFRKSSLGNDETDKEKKKFLGFFKANKRSNSKAEHLGLSGADSDEDPAKSASGGDLNGCVTTPNSPSLHSRSLTLGPSLSLGNISGVSMKSDMKKRRAPPPPSPKLLGQDKVSEKASLSSQADLQKKKRRAPAPPPPQQPPPSPVVPNRKEDKEENRKSTVGVGRQVPQKPPRGTARGPPQLVLPPPPPYPPPDTDVTEPVTFPGEGAGSETSELRPKLSLPLGPGSHCSMGGVSQVPAESEETASEDTTEDSGVMSSPSDAISLDSQQDSMRSKDKWSTDQEDGSDQDLAGTPELGPQKSPSWGKSGSGSSILRTEKATMPTNDDEDLFITGHLHQTLAELDEDLEGMEENYETDTSSLTNSVNGVSNHSLQEAIIPDSGVDDIPVTFIGEVSDEPFDSGLFSSRCNNATTFNTGSIASQRSHLSPSQTEHSQPFVRTSRKEPDPSPPSQDNRKRNQPTLANTSENENPVETDPTVTSLVSKLLIDDPKAKDKGKVHGSSHSEKTQAGHGINSLRVNPRDGKDESSNSAPPPWSHHGQALGGSYGLKYGLTTYKIVPPKSEMRCYDRDVSLSTGAIKIDELGNLVSPHMNGSRTISPPSAVVETDTPPIGKVKEFWRRNSMEKYLNGPAECTIKRAPSTTITATPEKPQQDNGMKAAFTVTTPQQQPASQEYGAHLEEERSRPQSAVSCSVKVPASNPTDITFLKPQRRTSSQYVASAIAKKMGPPKVHADVVRPHKATTEQCHEEAKLARSPPTRKDDAAPNLHSEARQHEHGTNQSSVCLPSNPGVQLPAGGHPKVEVNSTYGKSSTQDYPAAVHRNSYFLPGRSSHRDRVSVGQSCGFNEKQTTSNQKANSTSNFSQALDKAHPPPLLLAEARDSGRILMNGSARTPGNCEPPHSPKESTLTSYIILQTEEKPSSLSTDGQDADDTLPSSIFGPKKKFKPVIQRPLPKDVSLHSALMEAIHSSGGREKLRKTAEQTSEGRPKKPSYVEAESERSALLAAIRGHSGTLSLRKVSSLASEELQSFRNAALGAPGLDKPQQEDLGLPPPPALPPPPAPAPQAPSASVTVSRFSTGTPSNSVNARQALMDAIRSGTGAARLRKVPLLV.

The tract at residues 1–41 (MDAPRALAAKPPTGRKMKARAPPPPGKPAAQNVHSEQKLPH) is disordered. Phosphoserine is present on residues Ser47, Ser50, Ser212, Ser235, Ser272, and Ser294. Disordered stretches follow at residues 260–556 (SKAE…NDDE) and 647–768 (IASQ…HHGQ). The segment covering 288–317 (CVTTPNSPSLHSRSLTLGPSLSLGNISGVS) has biased composition (polar residues). A KKRRAP 1 motif is present at residues 323–328 (KKRRAP). Phosphoserine is present on residues Ser346 and Ser349. The KKRRAP 2 motif lies at 356-361 (KKRRAP). Over residues 361–374 (PAPPPPQQPPPSPV) the composition is skewed to pro residues. Residue Ser372 is modified to Phosphoserine. Basic and acidic residues predominate over residues 377-387 (NRKEDKEENRK). A compositionally biased stretch (pro residues) spans 411–423 (LVLPPPPPYPPPD). Over residues 469-480 (ESEETASEDTTE) the composition is skewed to acidic residues. Over residues 484–500 (VMSSPSDAISLDSQQDS) the composition is skewed to polar residues. Phosphothreonine is present on Thr522. Over residues 526-541 (GPQKSPSWGKSGSGSS) the composition is skewed to low complexity. 2 stretches are compositionally biased toward polar residues: residues 647–666 (IASQ…QPFV) and 687–710 (QPTL…TSLV). The residue at position 649 (Ser649) is a Phosphoserine. A compositionally biased stretch (basic and acidic residues) spans 714–736 (LIDDPKAKDKGKVHGSSHSEKTQ). Ser816 is modified (phosphoserine). 2 disordered regions span residues 892–923 (TPQQ…SVKV) and 967–991 (KATT…DDAA). Position 1038 is a phosphoserine (Ser1038). Residues 1070 to 1090 (GFNEKQTTSNQKANSTSNFSQ) are compositionally biased toward polar residues. Disordered regions lie at residues 1070-1094 (GFNE…ALDK), 1113-1133 (MNGS…KEST), 1145-1168 (KPSS…FGPK), and 1192-1221 (AIHS…SYVE). Ser1128 is modified (phosphoserine). 2 consecutive WH2 domains span residues 1185 to 1205 (LHSA…LRKT) and 1225 to 1245 (ERSA…LRKV). Over residues 1197 to 1214 (GGREKLRKTAEQTSEGRP) the composition is skewed to basic and acidic residues. The segment at 1262 to 1310 (GAPGLDKPQQEDLGLPPPPALPPPPAPAPQAPSASVTVSRFSTGTPSNS) is disordered. Over residues 1276-1291 (LPPPPALPPPPAPAPQ) the composition is skewed to pro residues. Over residues 1297–1310 (VTVSRFSTGTPSNS) the composition is skewed to polar residues. Residue Ser1303 is modified to Phosphoserine. Residues 1313–1333 (ARQALMDAIRSGTGAARLRKV) form the WH2 3 domain.

As to quaternary structure, identified in a complex composed of COBL, PACSIN1 and WASL. Interacts with PACSIN1, PACSIN2 and PACSIN3. Identified in a complex composed of ACTA1, COBL, GSN and TMSB4X. Interacts (via WH2 domains) with actin monomers. Interacts with DBNL. In terms of tissue distribution, detected in brain cortex and in the Purkinje cell layer in the cerebellum. Detected in hippocampus neurons, and at lower levels in testis, lung and spleen (at protein level). Detected in embryonic neural tube.

It is found in the cell membrane. The protein localises to the cytoplasm. It localises to the cytoskeleton. The protein resides in the cell projection. Its subcellular location is the ruffle. Plays an important role in the reorganization of the actin cytoskeleton. Binds to and sequesters actin monomers (G actin). Nucleates actin polymerization by assembling three actin monomers in cross-filament orientation and thereby promotes growth of actin filaments at the barbed end. Can also mediate actin depolymerization at barbed ends and severing of actin filaments. Promotes formation of cell ruffles. Regulates neuron morphogenesis and increases branching of axons and dendrites. Regulates dendrite branching in Purkinje cells. This chain is Protein cordon-bleu (Cobl), found in Mus musculus (Mouse).